We begin with the raw amino-acid sequence, 21 residues long: Sarafotoxin-D (21 aa).

2 cysteine pairs are disulfide-bonded: C1-C15 and C3-C11.

Belongs to the endothelin/sarafotoxin family. In terms of tissue distribution, expressed by the venom gland.

It localises to the secreted. Functionally, vasoconstrictor activity. These toxins cause cardiac arrest probably as a result of coronary vasospasm. May act by displaying agonistic activities towards endothelin-1 and -2 receptors (EDNRA and EDNRB). The chain is Sarafotoxin-D from Atractaspis engaddensis (Israeli burrowing asp).